The following is a 321-amino-acid chain: Glycerol-3-phosphate dehydrogenase [NAD(P)+] (321 aa).

NADPH is bound by residues S14, F15, R35, and K109. Positions 109 and 137 each coordinate sn-glycerol 3-phosphate. Residue A141 coordinates NADPH. K192, D252, S262, R263, and N264 together coordinate sn-glycerol 3-phosphate. The Proton acceptor role is filled by K192. Position 263 (R263) interacts with NADPH. NADPH contacts are provided by L287 and E289.

It belongs to the NAD-dependent glycerol-3-phosphate dehydrogenase family.

The protein resides in the cytoplasm. It catalyses the reaction sn-glycerol 3-phosphate + NAD(+) = dihydroxyacetone phosphate + NADH + H(+). It carries out the reaction sn-glycerol 3-phosphate + NADP(+) = dihydroxyacetone phosphate + NADPH + H(+). It functions in the pathway membrane lipid metabolism; glycerophospholipid metabolism. Its function is as follows. Catalyzes the reduction of the glycolytic intermediate dihydroxyacetone phosphate (DHAP) to sn-glycerol 3-phosphate (G3P), the key precursor for phospholipid synthesis. This is Glycerol-3-phosphate dehydrogenase [NAD(P)+] from Rickettsia felis (strain ATCC VR-1525 / URRWXCal2) (Rickettsia azadi).